We begin with the raw amino-acid sequence, 495 residues long: Probable histidine ammonia-lyase (495 aa).

The segment at residues 141-143 (ASG) is a cross-link (5-imidazolinone (Ala-Gly)). The residue at position 142 (Ser-142) is a 2,3-didehydroalanine (Ser).

Belongs to the PAL/histidase family. In terms of processing, contains an active site 4-methylidene-imidazol-5-one (MIO), which is formed autocatalytically by cyclization and dehydration of residues Ala-Ser-Gly.

Its subcellular location is the cytoplasm. It catalyses the reaction L-histidine = trans-urocanate + NH4(+). Its pathway is amino-acid degradation; L-histidine degradation into L-glutamate; N-formimidoyl-L-glutamate from L-histidine: step 1/3. In Thermoplasma volcanium (strain ATCC 51530 / DSM 4299 / JCM 9571 / NBRC 15438 / GSS1), this protein is Probable histidine ammonia-lyase.